The sequence spans 388 residues: L-lactate dehydrogenase (388 aa).

Residues 1–380 form the FMN hydroxy acid dehydrogenase domain; it reads MIISAASDYR…SADALSRVTR (380 aa). Substrate is bound at residue Tyr24. Residues Ser106 and Gln127 each coordinate FMN. Tyr129 contacts substrate. Residue Thr155 participates in FMN binding. Residue Arg164 coordinates substrate. Lys251 is an FMN binding site. His275 (proton acceptor) is an active-site residue. Arg278 lines the substrate pocket. An FMN-binding site is contributed by 306–330; that stretch reads DSGIRSGLDVVRMLALGADAVLLGR.

The protein belongs to the FMN-dependent alpha-hydroxy acid dehydrogenase family. The cofactor is FMN.

It is found in the cell inner membrane. It catalyses the reaction (S)-lactate + A = pyruvate + AH2. Catalyzes the conversion of L-lactate to pyruvate. Is coupled to the respiratory chain. The sequence is that of L-lactate dehydrogenase from Xanthomonas oryzae pv. oryzae (strain MAFF 311018).